A 213-amino-acid chain; its full sequence is Ras-related protein Rab-4B (213 aa).

Alanine 2 is subject to N-acetylalanine. Residues glycine 18, threonine 19, glycine 20, lysine 21, serine 22, and cysteine 23 each coordinate GDP. 9 residues coordinate GTP: glycine 18, threonine 19, glycine 20, lysine 21, serine 22, cysteine 23, serine 37, histidine 39, and threonine 40. Serine 22 provides a ligand contact to Mg(2+). Residues 39–44 (HTIGVE) carry the Switch 1 motif. 2 residues coordinate Mg(2+): threonine 40 and aspartate 63. A Switch 2 motif is present at residues 65–74 (AGQERFRSVT). GTP is bound at residue glycine 66. Glutamine 67 carries the post-translational modification 5-glutamyl serotonin. Residues asparagine 121, lysine 122, aspartate 124, alanine 152, and leucine 153 each contribute to the GDP site. GTP is bound by residues asparagine 121, lysine 122, aspartate 124, alanine 152, and leucine 153. Serine 185 and serine 193 each carry phosphoserine. 2 S-geranylgeranyl cysteine lipidation sites follow: cysteine 211 and cysteine 213. Cysteine 213 is subject to Cysteine methyl ester.

It belongs to the small GTPase superfamily. Rab family. Interacts (GTP-bound form) with RUFY1; the interaction allows endosomal tethering and fusion. Mg(2+) is required as a cofactor. In terms of processing, serotonylation of Gln-67 by TGM2 during activation and aggregation of platelets leads to constitutive activation of GTPase activity.

It localises to the cell membrane. The protein localises to the early endosome membrane. The enzyme catalyses GTP + H2O = GDP + phosphate + H(+). With respect to regulation, regulated by guanine nucleotide exchange factors (GEFs) which promote the exchange of bound GDP for free GTP. Regulated by GTPase activating proteins (GAPs) which increase the GTP hydrolysis activity. Inhibited by GDP dissociation inhibitors (GDIs). In terms of biological role, the small GTPases Rab are key regulators of intracellular membrane trafficking, from the formation of transport vesicles to their fusion with membranes. Rabs cycle between an inactive GDP-bound form and an active GTP-bound form that is able to recruit to membranes different set of downstream effectors directly responsible for vesicle formation, movement, tethering and fusion. RAB4B mediates endosomal tethering and fusion through the interaction with RUFY1 and RAB14. Acts as a regulator of platelet alpha-granule release during activation and aggregation of platelets. This chain is Ras-related protein Rab-4B, found in Mus musculus (Mouse).